The sequence spans 62 residues: Sec-independent protein translocase protein TatA (62 aa).

A helical membrane pass occupies residues 10 to 32; that stretch reads LLIILIIVIAIFGAGKLAGLGGA.

Belongs to the TatA/E family. In terms of assembly, forms a complex with TatC.

It localises to the cell membrane. In terms of biological role, part of the twin-arginine translocation (Tat) system that transports large folded proteins containing a characteristic twin-arginine motif in their signal peptide across membranes. TatA could form the protein-conducting channel of the Tat system. This Chloroflexus aurantiacus (strain ATCC 29366 / DSM 635 / J-10-fl) protein is Sec-independent protein translocase protein TatA.